The chain runs to 148 residues: 3-dehydroquinate dehydratase (148 aa).

Residue tyrosine 23 is the Proton acceptor of the active site. Residues asparagine 75, histidine 81, and aspartate 88 each coordinate substrate. Histidine 101 acts as the Proton donor in catalysis. Substrate-binding positions include 102-103 (LS) and arginine 112.

The protein belongs to the type-II 3-dehydroquinase family. As to quaternary structure, homododecamer.

It catalyses the reaction 3-dehydroquinate = 3-dehydroshikimate + H2O. Its pathway is metabolic intermediate biosynthesis; chorismate biosynthesis; chorismate from D-erythrose 4-phosphate and phosphoenolpyruvate: step 3/7. Its function is as follows. Catalyzes a trans-dehydration via an enolate intermediate. This Xanthomonas campestris pv. campestris (strain B100) protein is 3-dehydroquinate dehydratase.